The chain runs to 391 residues: Cyclin-A1 (391 aa).

It belongs to the cyclin family. Cyclin AB subfamily. In terms of assembly, interacts with the CDK1 and the CDK2 protein kinases to form a serine/threonine kinase holoenzyme complex. The cyclin subunit imparts substrate specificity to the complex.

It localises to the nucleus. In terms of biological role, may be involved in the control of the cell cycle at the G1/S (start) and G2/M (mitosis) transitions. This chain is Cyclin-A1 (ccna1), found in Carassius auratus (Goldfish).